We begin with the raw amino-acid sequence, 189 residues long: Interferon alpha-10 (189 aa).

A signal peptide spans 1–23; that stretch reads MALSFSLLMAVLVLSYKSICSLG. 2 cysteine pairs are disulfide-bonded: cysteine 24-cysteine 122 and cysteine 52-cysteine 162.

Belongs to the alpha/beta interferon family.

The protein resides in the secreted. Produced by macrophages, IFN-alpha have antiviral activities. Interferon stimulates the production of two enzymes: a protein kinase and an oligoadenylate synthetase. This is Interferon alpha-10 (IFNA10) from Homo sapiens (Human).